The following is a 654-amino-acid chain: Peptide-N(4)-(N-acetyl-beta-glucosaminyl)asparagine amidase (654 aa).

Residue alanine 2 is modified to N-acetylalanine. One can recognise a PUB domain in the interval 30–91 (EASKLLLTYA…EGETHLIFPK (62 aa)). Residues 112–163 (RLDGSNKSHKVKSSQQPAASTQLPTTPSSNPSGLNQHTRNRQGQSSDPPSAS) are disordered. The span at 124–163 (SSQQPAASTQLPTTPSSNPSGLNQHTRNRQGQSSDPPSAS) shows a compositional bias: polar residues. Threonine 137 is subject to Phosphothreonine. Residues cysteine 250, cysteine 253, cysteine 283, and cysteine 286 each contribute to the Zn(2+) site. Cysteine 309 (nucleophile) is an active-site residue. Residues histidine 336 and aspartate 353 contribute to the active site. A PAW domain is found at 454–654 (ELGGRISGSV…LEIIIKFSDL (201 aa)).

It belongs to the transglutaminase-like superfamily. PNGase family. Component of a complex required to couple retrotranslocation, ubiquitination and deglycosylation composed of NGLY1, SAKS1, AMFR, VCP and RAD23B. Interacts with the proteasome components RAD23B and PSMC1. Interacts with directly with VCP. Interacts with DERL1, bringing it close to the endoplasmic reticulum membrane. Interacts with SAKS1. It depends on Zn(2+) as a cofactor.

Its subcellular location is the cytoplasm. It catalyses the reaction Hydrolysis of an N(4)-(acetyl-beta-D-glucosaminyl)asparagine residue in which the glucosamine residue may be further glycosylated, to yield a (substituted) N-acetyl-beta-D-glucosaminylamine and a peptide containing an aspartate residue.. With respect to regulation, inhibited by Z-VAD-fmk, a well-known caspase inhibitor, which inhibits enzyme activity through covalent binding of the carbohydrate to the single Cys-306 residue. Functionally, specifically deglycosylates the denatured form of N-linked glycoproteins in the cytoplasm and assists their proteasome-mediated degradation. Cleaves the beta-aspartyl-glucosamine (GlcNAc) of the glycan and the amide side chain of Asn, converting Asn to Asp. Prefers proteins containing high-mannose over those bearing complex type oligosaccharides. Can recognize misfolded proteins in the endoplasmic reticulum that are exported to the cytosol to be destroyed and deglycosylate them, while it has no activity toward native proteins. Deglycosylation is a prerequisite for subsequent proteasome-mediated degradation of some, but not all, misfolded glycoproteins. This chain is Peptide-N(4)-(N-acetyl-beta-glucosaminyl)asparagine amidase (NGLY1), found in Homo sapiens (Human).